The primary structure comprises 336 residues: Octanoyltransferase (336 aa).

Positions 1 to 16 (MPKSALMSSSFQTSVS) are enriched in polar residues. 2 disordered regions span residues 1 to 22 (MPKSALMSSSFQTSVSPRPLPV) and 48 to 88 (QGKG…GGGR). The segment at 1-92 (MPKSALMSSS…AAGGGRTIRD (92 aa)) is unknown. Positions 93-336 (VKEAAFDVLD…GQEALSVASP (244 aa)) are lipB domain. The BPL/LPL catalytic domain maps to 124–318 (VGGRPTLLLV…AFALTFADYD (195 aa)). Residues 170-177 (RGGDVTYH), 244-246 (SIG), and 257-259 (GIG) contribute to the substrate site. The Acyl-thioester intermediate role is filled by cysteine 275.

It in the C-terminal section; belongs to the LipB family.

It is found in the cytoplasm. The catalysed reaction is octanoyl-[ACP] + L-lysyl-[protein] = N(6)-octanoyl-L-lysyl-[protein] + holo-[ACP] + H(+). The protein operates within protein modification; protein lipoylation via endogenous pathway; protein N(6)-(lipoyl)lysine from octanoyl-[acyl-carrier-protein]: step 1/2. Its function is as follows. Catalyzes the transfer of endogenously produced octanoic acid from octanoyl-acyl-carrier-protein onto the lipoyl domains of lipoate-dependent enzymes. Lipoyl-ACP can also act as a substrate although octanoyl-ACP is likely to be the physiological substrate. The protein is Octanoyltransferase of Deinococcus radiodurans (strain ATCC 13939 / DSM 20539 / JCM 16871 / CCUG 27074 / LMG 4051 / NBRC 15346 / NCIMB 9279 / VKM B-1422 / R1).